A 321-amino-acid polypeptide reads, in one-letter code: GDP-L-fucose synthase (321 aa).

14–20 lines the NADP(+) pocket; sequence GGSGLVG. Tyr-143 acts as the Proton donor/acceptor in catalysis. Residues Lys-147, 170–173, and His-186 each bind NADP(+); that span reads PTNV. Residues Lys-194, Trp-208, Arg-215, and Asp-277 each contribute to the substrate site.

The protein belongs to the NAD(P)-dependent epimerase/dehydratase family. Fucose synthase subfamily. As to quaternary structure, homodimer.

It carries out the reaction GDP-beta-L-fucose + NADP(+) = GDP-4-dehydro-alpha-D-rhamnose + NADPH + H(+). It participates in nucleotide-sugar biosynthesis; GDP-L-fucose biosynthesis via de novo pathway; GDP-L-fucose from GDP-alpha-D-mannose: step 2/2. Its function is as follows. Catalyzes the two-step NADP-dependent conversion of GDP-4-dehydro-6-deoxy-D-mannose to GDP-fucose, involving an epimerase and a reductase reaction. This Homo sapiens (Human) protein is GDP-L-fucose synthase.